The primary structure comprises 859 residues: Linoleate 9S-lipoxygenase B (859 aa).

In terms of domain architecture, PLAT spans 34–158 (INIGASVVDG…RYKSDRIFFA (125 aa)). One can recognise a Lipoxygenase domain in the interval 161–859 (AYLPSETPQP…GKGIPNSVSI (699 aa)). The interval 213–246 (EYARPILGGSSEYPYPRRGRTGREPTKADPNCES) is disordered. Basic and acidic residues predominate over residues 233-244 (TGREPTKADPNC). Fe cation is bound by residues H521, H526, H711, and I859.

Belongs to the lipoxygenase family. Monomer. Requires Fe cation as cofactor. As to expression, fruit specific.

Its subcellular location is the cytoplasm. It catalyses the reaction (9Z,12Z)-octadecadienoate + O2 = (9S)-hydroperoxy-(10E,12Z)-octadecadienoate. It participates in lipid metabolism; oxylipin biosynthesis. Its function is as follows. Plant lipoxygenase may be involved in a number of diverse aspects of plant physiology including growth and development, pest resistance, and senescence or responses to wounding. It catalyzes the hydroperoxidation of lipids containing a cis,cis-1,4-pentadiene structure. The polypeptide is Linoleate 9S-lipoxygenase B (LOX1.2) (Solanum lycopersicum (Tomato)).